Consider the following 618-residue polypeptide: Citrolysin protein 1 (618 aa).

In terms of biological role, bacterial hemolysins are exotoxins that attack blood cell membranes and cause cell rupture by mechanisms not clearly defined. This Citrobacter freundii protein is Citrolysin protein 1.